Here is a 527-residue protein sequence, read N- to C-terminus: Serine/threonine-protein kinase NLK (527 aa).

Sufficient for interaction with DAPK3 regions lie at residues 1-125 and 124-416; these read MSLC…KAHH and HHHQ…SKRI. Required for interaction with TAB2 regions lie at residues 1–304 and 434–527; these read MSLC…VVTQ and YHTC…LVWE. 2 disordered regions span residues 22-72 and 90-139; these read AAAA…SSAA and QQPY…LDIE. Positions 26 to 54 are enriched in basic residues; sequence GHHHHHHHHLPHLPPPHLHHHHHPQHHLH. Residues 103–119 show a composition bias toward low complexity; that stretch reads PGPAAAAPAQVQAAAAA. Residues 122-131 are compositionally biased toward basic residues; it reads KAHHHQHSHH. Residues 138–427 enclose the Protein kinase domain; the sequence is IEPDRPIGYG…AKDALAHPYL (290 aa). Residues 144-152 and lysine 167 contribute to the ATP site; that span reads IGYGAFGVV. Residue aspartate 264 is the Proton acceptor of the active site. Residue threonine 298 is modified to Phosphothreonine; by autocatalysis. A TQE motif is present at residues 298 to 300; it reads TQE. The tract at residues 428 to 527 is required for homodimerization and kinase activation and localization to the nucleus; the sequence is DEGRLRYHTC…EMPPSPLVWE (100 aa). Serine 522 carries the phosphoserine modification.

This sequence belongs to the protein kinase superfamily. CMGC Ser/Thr protein kinase family. MAP kinase subfamily. As to quaternary structure, homodimer. Homodimerization is required for intermolecular autophosphorylation, kinase activation and nuclear localization. Interacts with RNF138/NARF. Interacts with FOXO1 and FOXO3. Interacts with the upstream activating kinases HIPK2 and MAP3K7/TAK1. Interaction with MAP3K7/TAK1 seems to be indirect, and may be mediated by other proteins such as STAT3, TAB1 and TAB2. Interacts with and phosphorylates a number of transcription factors including FOXO4, LEF1, MYB, MYBL1, MYBL2, NOTCH1 and TCF7L2/TCF4. May interact with components of cullin-RING-based SCF (SKP1-CUL1-F-box protein) E3 ubiquitin-protein ligase complexes. Interacts with MEF2A. Interacts with ATF5; the interaction stabilizes ATF5 at the protein level in a kinase-independent manner. It depends on Mg(2+) as a cofactor. Post-translationally, phosphorylated on Thr-298. Intermolecular autophosphorylation on Thr-298 activates the enzyme. As to expression, expressed at high levels in the brain, and at lower levels in heart, kidney, lung and liver.

It is found in the nucleus. Its subcellular location is the cytoplasm. It catalyses the reaction L-seryl-[protein] + ATP = O-phospho-L-seryl-[protein] + ADP + H(+). The catalysed reaction is L-threonyl-[protein] + ATP = O-phospho-L-threonyl-[protein] + ADP + H(+). Activated by the non-canonical Wnt signaling pathway, in which WNT5A leads to activation of MAP3K7/TAK1 and HIPK2, which subsequently phosphorylates and activates this protein. Activated by dimerization and subsequent intermolecular autophosphorylation on Thr-298. Other cytokines such as IL6 may also activate this regulatory circuit. Serine/threonine-protein kinase that regulates a number of transcription factors with key roles in cell fate determination. Positive effector of the non-canonical Wnt signaling pathway, acting downstream of WNT5A, MAP3K7/TAK1 and HIPK2. Negative regulator of the canonical Wnt/beta-catenin signaling pathway. Binds to and phosphorylates TCF7L2/TCF4 and LEF1, promoting the dissociation of the TCF7L2/LEF1/beta-catenin complex from DNA, as well as the ubiquitination and subsequent proteolysis of LEF1. Together these effects inhibit the transcriptional activation of canonical Wnt/beta-catenin target genes. Negative regulator of the Notch signaling pathway. Binds to and phosphorylates NOTCH1, thereby preventing the formation of a transcriptionally active ternary complex of NOTCH1, RBPJ/RBPSUH and MAML1. Negative regulator of the MYB family of transcription factors. Phosphorylation of MYB leads to its subsequent proteolysis while phosphorylation of MYBL1 and MYBL2 inhibits their interaction with the coactivator CREBBP. Other transcription factors may also be inhibited by direct phosphorylation of CREBBP itself. Acts downstream of IL6 and MAP3K7/TAK1 to phosphorylate STAT3, which is in turn required for activation of NLK by MAP3K7/TAK1. Upon IL1B stimulus, cooperates with ATF5 to activate the transactivation activity of C/EBP subfamily members. Phosphorylates ATF5 but also stabilizes ATF5 protein levels in a kinase-independent manner. Acts as an inhibitor of the mTORC1 complex in response to osmotic stress by mediating phosphorylation of RPTOR, thereby preventing recruitment of the mTORC1 complex to lysosomes. This chain is Serine/threonine-protein kinase NLK, found in Mus musculus (Mouse).